The sequence spans 497 residues: Putative aldehyde dehydrogenase AldA (497 aa).

213 to 219 (GKGSESG) is an NAD(+) binding site. Active-site residues include E257 and C291.

The protein belongs to the aldehyde dehydrogenase family.

The enzyme catalyses an aldehyde + NAD(+) + H2O = a carboxylate + NADH + 2 H(+). This chain is Putative aldehyde dehydrogenase AldA (aldA), found in Staphylococcus haemolyticus (strain JCSC1435).